Reading from the N-terminus, the 663-residue chain is A-type ATP synthase subunit I (663 aa).

7 consecutive transmembrane segments (helical) span residues 376-396 (FFFG…IVAA), 412-432 (FAYI…LFGS), 468-488 (LAAL…GFVI), 497-517 (GAVF…LLAS), 534-554 (IALF…LMII), 568-588 (ARLM…NVLV), and 589-609 (GMVW…IIFF).

Belongs to the V-ATPase 116 kDa subunit family. As to quaternary structure, has multiple subunits with at least A(3), B(3), C, D, E, F, H, I and proteolipid K(x).

It localises to the cell membrane. Component of the A-type ATP synthase that produces ATP from ADP in the presence of a proton gradient across the membrane. This is A-type ATP synthase subunit I from Thermococcus kodakarensis (strain ATCC BAA-918 / JCM 12380 / KOD1) (Pyrococcus kodakaraensis (strain KOD1)).